A 637-amino-acid polypeptide reads, in one-letter code: Probable membrane transporter protein MamO (637 aa).

Residues 1–24 lie on the Cytoplasmic side of the membrane; sequence MIEVGETMGELPTNKIVFCERSWK. The helical transmembrane segment at 25–45 threads the bilayer; that stretch reads TPVSILAFLIFVTFAWGIYLL. Residues 46-352 are Lumenal-facing; that stretch reads DHYDEDDNFH…AKIGGYSVAD (307 aa). Residues 78–268 form a protease-like region; that stretch reads LYHTVPPAVV…VIVSHLQDVV (191 aa). A divalent metal cation-binding residues include H148 and H263. A helical transmembrane segment spans residues 353-373; the sequence is IVGLVMLALAAGVTGGMMTMG. Positions 370-637 are TSUP-like; that stretch reads MTMGGGVLQV…AIALKMLTSV (268 aa). The Cytoplasmic segment spans residues 374–378; sequence GGVLQ. The chain crosses the membrane as a helical span at residues 379–399; sequence VAGMMVFFGYGMYLIRPVVFL. Over 400–416 the chain is Lumenal; it reads TNVVVYGAASLRNDKAQ. A helical membrane pass occupies residues 417–437; sequence LVQWDKVKPLIPWGIAGVILG. A topological domain (cytoplasmic) is located at residue Y438. Residues 439–459 traverse the membrane as a helical segment; it reads FIGNAIGDSVVGILLGLFALI. Residues 460 to 517 lie on the Lumenal side of the membrane; sequence MAGKAVMEILQPNAGEETAESISATEAEDEMDELMALADGTSRPKASGLALPEGHARS. Residues 518 to 538 traverse the membrane as a helical segment; sequence AVLGLPMGLFSGILGISGGVI. The Cytoplasmic segment spans residues 539-554; that stretch reads EVPLQRYVGRISLQNA. The helical transmembrane segment at 555 to 575 threads the bilayer; that stretch reads IANSSVLVFWASVAGSVVAFL. Residues 576–586 lie on the Lumenal side of the membrane; that stretch reads HGSSTGLIHWE. The chain crosses the membrane as a helical span at residues 587–607; it reads APVTLALVMIPGAYVGGIIGA. Residues 608-616 lie on the Cytoplasmic side of the membrane; sequence RLMRVLPVR. A helical membrane pass occupies residues 617-637; sequence VLKGVYAATMAAIALKMLTSV.

The protein in the N-terminal section; belongs to the peptidase S1C family. In the C-terminal section; belongs to the 4-toluene sulfonate uptake permease (TSUP) (TC 2.A.102) family. A metal cation is required as a cofactor. Subject to proteolytic cleavage by MamE.

It is found in the magnetosome membrane. Functionally, plays 2 roles; promotes magnetite nucleation/formation and activates the MamE protease. Despite its near conservation of a protease-like sequence, this is probably not a protease. Required in conjunction with MamP for proteolysis of at least MamE, itself and MamP. May transport a solute that controls MamE's protease activity. May place individual iron atoms into the magnetite lattice. The polypeptide is Probable membrane transporter protein MamO (mamO) (Paramagnetospirillum magneticum (strain ATCC 700264 / AMB-1) (Magnetospirillum magneticum)).